Consider the following 446-residue polypeptide: MILLPQEIIRNKRDGKTLSRQEIDFFIKGITDNSVTEGQIAAFAMAVYFQDMNMDERVLLVSAMRDSGQVINWQSLNLNGPVVDKHSTGGVGDVTSLILGPMVAACGGYVPMISGRGLGHTGGTLDKLDAISGYKTTPDSLDHFRKIVKEVGVAIIGQTGDLAPADKRFYATRDITATVESIPLITASILSKKLAAGIDALVMDVKAGSGAFMPTFEQSEALANSIVGVANGAGCKTSALITNMDQVLASSAGNAVEVREAVRFLKGEVVNPRLHEVTMALCAEMLLLSGLAADIKEAQAKLQKVLDNGKAAEVFAKMVGALGGPADFIENQDNYLQKSAIVRPVYAQHSGIVQSMDTRALGMAVVNLGGGRHSASDSIDYAVGLSGILSLGESADSEKPLAMIHAQSEKQFSEAQRAIQSAIICGTDSLQAQTQVYRHIRLPDIS.

Belongs to the thymidine/pyrimidine-nucleoside phosphorylase family. As to quaternary structure, homodimer.

The catalysed reaction is thymidine + phosphate = 2-deoxy-alpha-D-ribose 1-phosphate + thymine. It participates in pyrimidine metabolism; dTMP biosynthesis via salvage pathway; dTMP from thymine: step 1/2. In terms of biological role, the enzymes which catalyze the reversible phosphorolysis of pyrimidine nucleosides are involved in the degradation of these compounds and in their utilization as carbon and energy sources, or in the rescue of pyrimidine bases for nucleotide synthesis. The sequence is that of Thymidine phosphorylase from Psychromonas ingrahamii (strain DSM 17664 / CCUG 51855 / 37).